The following is a 395-amino-acid chain: S-adenosylmethionine synthase (395 aa).

H14 is a binding site for ATP. D16 contacts Mg(2+). E42 lines the K(+) pocket. The L-methionine site is built by E55 and Q98. The segment at Q98–K108 is flexible loop. ATP is bound by residues D174 to K176, R240 to F241, D249, R255 to K256, A272, and K276. Residue D249 participates in L-methionine binding. K280 is an L-methionine binding site.

The protein belongs to the AdoMet synthase family. In terms of assembly, homotetramer; dimer of dimers. Mg(2+) is required as a cofactor. Requires K(+) as cofactor.

It localises to the cytoplasm. It carries out the reaction L-methionine + ATP + H2O = S-adenosyl-L-methionine + phosphate + diphosphate. It functions in the pathway amino-acid biosynthesis; S-adenosyl-L-methionine biosynthesis; S-adenosyl-L-methionine from L-methionine: step 1/1. Catalyzes the formation of S-adenosylmethionine (AdoMet) from methionine and ATP. The overall synthetic reaction is composed of two sequential steps, AdoMet formation and the subsequent tripolyphosphate hydrolysis which occurs prior to release of AdoMet from the enzyme. In Caldanaerobacter subterraneus subsp. tengcongensis (strain DSM 15242 / JCM 11007 / NBRC 100824 / MB4) (Thermoanaerobacter tengcongensis), this protein is S-adenosylmethionine synthase.